We begin with the raw amino-acid sequence, 308 residues long: Methionyl-tRNA formyltransferase (308 aa).

Residue 110–113 (SLLP) participates in (6S)-5,6,7,8-tetrahydrofolate binding.

The protein belongs to the Fmt family.

The catalysed reaction is L-methionyl-tRNA(fMet) + (6R)-10-formyltetrahydrofolate = N-formyl-L-methionyl-tRNA(fMet) + (6S)-5,6,7,8-tetrahydrofolate + H(+). Attaches a formyl group to the free amino group of methionyl-tRNA(fMet). The formyl group appears to play a dual role in the initiator identity of N-formylmethionyl-tRNA by promoting its recognition by IF2 and preventing the misappropriation of this tRNA by the elongation apparatus. This Neisseria meningitidis serogroup C / serotype 2a (strain ATCC 700532 / DSM 15464 / FAM18) protein is Methionyl-tRNA formyltransferase.